The primary structure comprises 348 residues: Glucose 1-dehydrogenase 2 (348 aa).

Cys39 serves as a coordination point for Zn(2+). Thr41 lines the substrate pocket. Residues His64 and Glu65 each coordinate Zn(2+). Substrate is bound by residues Glu110 and Glu146. Glu146 serves as a coordination point for Zn(2+). NADP(+) is bound by residues 178–181 (AGPV), 260–262 (LGV), and 289–291 (SVN). Asn291 contributes to the substrate binding site.

Belongs to the zinc-containing alcohol dehydrogenase family. Glucose 1-dehydrogenase subfamily. Zn(2+) serves as cofactor.

The catalysed reaction is D-glucose + NAD(+) = D-glucono-1,5-lactone + NADH + H(+). It carries out the reaction D-glucose + NADP(+) = D-glucono-1,5-lactone + NADPH + H(+). Its function is as follows. Catalyzes the NAD(P)(+)-dependent oxidation of D-glucose to D-gluconate via gluconolactone. Can utilize both NAD(+) and NADP(+) as electron acceptor. Is involved in the degradation of glucose through a non-phosphorylative variant of the Entner-Doudoroff pathway. This is Glucose 1-dehydrogenase 2 from Vulcanisaeta moutnovskia (strain 768-28).